Consider the following 500-residue polypeptide: Cytochrome c-552 (500 aa).

An N-terminal signal peptide occupies residues 1–24; that stretch reads MKFLIKSLAVATISILGCLQTALA. Histidine 102, cysteine 130, cysteine 133, lysine 134, cysteine 168, cysteine 171, histidine 172, cysteine 217, cysteine 220, and histidine 221 together coordinate heme c. Glutamate 223, tyrosine 224, lysine 268, and glutamine 270 together coordinate Ca(2+). Residue tyrosine 224 participates in substrate binding. Histidine 271 is a binding site for substrate. Residues histidine 282, cysteine 289, cysteine 292, histidine 293, histidine 308, cysteine 321, cysteine 324, histidine 325, and histidine 400 each contribute to the heme c site. Residues 477-500 are disordered; that stretch reads ARAKGLLPAEEADKPVAAPKAEAK.

This sequence belongs to the cytochrome c-552 family. Ca(2+) serves as cofactor. The cofactor is heme c.

It is found in the periplasm. It catalyses the reaction 6 Fe(III)-[cytochrome c] + NH4(+) + 2 H2O = 6 Fe(II)-[cytochrome c] + nitrite + 8 H(+). It functions in the pathway nitrogen metabolism; nitrate reduction (assimilation). In terms of biological role, catalyzes the reduction of nitrite to ammonia, consuming six electrons in the process. This is Cytochrome c-552 from Mannheimia haemolytica (Pasteurella haemolytica).